A 431-amino-acid polypeptide reads, in one-letter code: Tol-Pal system protein TolB (431 aa).

The first 26 residues, 1-26 (MRLMTKLGFRALVASCLIAAGAAANA), serve as a signal peptide directing secretion. Positions 411 to 431 (PQILSVQGGSVREPSWGPFMQ) are disordered.

It belongs to the TolB family. As to quaternary structure, the Tol-Pal system is composed of five core proteins: the inner membrane proteins TolA, TolQ and TolR, the periplasmic protein TolB and the outer membrane protein Pal. They form a network linking the inner and outer membranes and the peptidoglycan layer.

It localises to the periplasm. In terms of biological role, part of the Tol-Pal system, which plays a role in outer membrane invagination during cell division and is important for maintaining outer membrane integrity. In Burkholderia ambifaria (strain ATCC BAA-244 / DSM 16087 / CCUG 44356 / LMG 19182 / AMMD) (Burkholderia cepacia (strain AMMD)), this protein is Tol-Pal system protein TolB.